A 156-amino-acid chain; its full sequence is Small ribosomal subunit protein uS7 (156 aa).

It belongs to the universal ribosomal protein uS7 family. Part of the 30S ribosomal subunit. Contacts proteins S9 and S11.

One of the primary rRNA binding proteins, it binds directly to 16S rRNA where it nucleates assembly of the head domain of the 30S subunit. Is located at the subunit interface close to the decoding center, probably blocks exit of the E-site tRNA. The polypeptide is Small ribosomal subunit protein uS7 (Maricaulis maris (strain MCS10) (Caulobacter maris)).